A 292-amino-acid polypeptide reads, in one-letter code: NAD kinase (292 aa).

Asp73 acts as the Proton acceptor in catalysis. NAD(+)-binding positions include 73 to 74 (DG), 147 to 148 (NE), His158, Arg175, Asp177, 188 to 193 (TAYSLS), and Gln247.

It belongs to the NAD kinase family. A divalent metal cation is required as a cofactor.

The protein resides in the cytoplasm. It catalyses the reaction NAD(+) + ATP = ADP + NADP(+) + H(+). Functionally, involved in the regulation of the intracellular balance of NAD and NADP, and is a key enzyme in the biosynthesis of NADP. Catalyzes specifically the phosphorylation on 2'-hydroxyl of the adenosine moiety of NAD to yield NADP. This chain is NAD kinase, found in Klebsiella pneumoniae subsp. pneumoniae (strain ATCC 700721 / MGH 78578).